Consider the following 1594-residue polypeptide: Mucin-like protein (1594 aa).

Residues 1 to 1530 (DTTAGPDTTS…YETREDGLEM (1530 aa)) lie on the Extracellular side of the membrane. TSP type-1 domains are found at residues 141–196 (DGGF…GSCP), 198–253 (DGNF…PPCP), and 255–310 (DGNF…GPCP). Disulfide bonds link Cys-153-Cys-190, Cys-157-Cys-195, Cys-168-Cys-180, Cys-210-Cys-247, Cys-214-Cys-252, Cys-225-Cys-237, Cys-267-Cys-304, Cys-271-Cys-309, and Cys-282-Cys-294. The region spanning 400 to 566 (LTISDDAFEQ…GVWFFRLEMN (167 aa)) is the NIDO domain. Positions 568–706 (ILSLAGKKCN…RSCFGYTLRR (139 aa)) constitute an AMOP domain. The region spanning 706-901 (RRGLIFGDPH…KWQINASQSL (196 aa)) is the VWFD domain. 2 EGF-like domains span residues 1063–1108 (LILL…QYCQ) and 1110–1156 (KIDA…SICE). Cystine bridges form between Cys-1067/Cys-1075, Cys-1069/Cys-1096, Cys-1098/Cys-1107, Cys-1114/Cys-1127, Cys-1121/Cys-1141, Cys-1144/Cys-1155, Cys-1161/Cys-1173, Cys-1169/Cys-1182, Cys-1285/Cys-1296, Cys-1292/Cys-1305, Cys-1307/Cys-1320, Cys-1326/Cys-1341, Cys-1334/Cys-1350, and Cys-1352/Cys-1363. In terms of domain architecture, EGF-like 3; calcium-binding spans 1157–1191 (DIDECSDANVSKCDHSCINLPGSYVCDCNQGFSLE). The EGF-like 4; calcium-binding domain occupies 1281 to 1321 (DINECTTHRHKCSQICHNLDGSYTCSCQPGFNLSPDQTTCE). One can recognise an EGF-like 5; calcium-binding domain in the interval 1322–1364 (DIDECGLINEAHCEGSLEICINTMGSFRCECQDGFHRVNDTCQ). Residues 1531–1551 (IWLLVGVSVAVAVPLMIVIVI) form a helical membrane-spanning segment. Topologically, residues 1552–1593 (LYREYRRIAKQRRKTNNFDLRQWSGARERTIYSGFTNSKSAR) are cytoplasmic.

In terms of tissue distribution, component of the acid-insoluble and acid-soluble organic matrix of the aragonitic skeleton (at protein level).

Its subcellular location is the membrane. This Acropora millepora (Staghorn coral) protein is Mucin-like protein.